The following is a 597-amino-acid chain: Large ribosomal subunit assembly factor BipA (597 aa).

A tr-type G domain is found at 3–198 (LPIRNVAIIA…AILHHVPPPA (196 aa)). GTP contacts are provided by residues 15–20 (DHGKTT) and 128–131 (NKID).

The protein belongs to the TRAFAC class translation factor GTPase superfamily. Classic translation factor GTPase family. BipA subfamily. Monomer.

The protein resides in the cytoplasm. It catalyses the reaction GTP + H2O = GDP + phosphate + H(+). Its function is as follows. A 50S ribosomal subunit assembly protein with GTPase activity, required for 50S subunit assembly at low temperatures, may also play a role in translation. Binds GTP and analogs. Binds the 70S ribosome between the 30S and 50S subunits, in a similar position as ribosome-bound EF-G; it contacts a number of ribosomal proteins, both rRNAs and the A-site tRNA. This chain is Large ribosomal subunit assembly factor BipA, found in Synechocystis sp. (strain ATCC 27184 / PCC 6803 / Kazusa).